The primary structure comprises 57 residues: uncharacterized protein (57 aa).

Residues 26 to 57 (VVSTRKRLKQNTNTPPHYDTSEDEDEDNYYNY) form a disordered region. The segment covering 46–57 (SEDEDEDNYYNY) has biased composition (acidic residues).

This is an uncharacterized protein from Autographa californica nuclear polyhedrosis virus (AcMNPV).